The following is a 417-amino-acid chain: Equilibrative nucleotide transporter 7 (417 aa).

A run of 11 helical transmembrane segments spans residues 19–39 (LVCC…LTIT), 54–74 (VLTI…ATKE), 84–104 (IFGY…DLAS), 110–130 (VVAY…DAFV), 143–163 (PDFI…TSVL), 184–204 (LFIG…TLVF), 264–284 (LGIN…GFLY), 293–315 (GDWY…RFIP), 326–346 (KWIT…YFTA), 353–373 (WMLF…VCIF), and 392–412 (MCVF…LWLI).

It belongs to the SLC29A/ENT transporter (TC 2.A.57) family. In terms of tissue distribution, expressed in leaves and flowers.

It localises to the cell membrane. Its function is as follows. Nucleoside transporter that can mediate uptake of adenosine, uridine, guanosine or cytidine when expressed in a heterologous system (yeast). The sequence is that of Equilibrative nucleotide transporter 7 (ENT7) from Arabidopsis thaliana (Mouse-ear cress).